The primary structure comprises 203 residues: Small ribosomal subunit protein uS4 (203 aa).

One can recognise an S4 RNA-binding domain in the interval 93–156 (RRLDNVVYRL…MKVPAILEAV (64 aa)).

This sequence belongs to the universal ribosomal protein uS4 family. Part of the 30S ribosomal subunit. Contacts protein S5. The interaction surface between S4 and S5 is involved in control of translational fidelity.

One of the primary rRNA binding proteins, it binds directly to 16S rRNA where it nucleates assembly of the body of the 30S subunit. In terms of biological role, with S5 and S12 plays an important role in translational accuracy. This Streptococcus pyogenes serotype M1 protein is Small ribosomal subunit protein uS4.